We begin with the raw amino-acid sequence, 855 residues long: DNA mismatch repair protein MutS (855 aa).

621-628 (GPNMGGKS) contributes to the ATP binding site.

It belongs to the DNA mismatch repair MutS family.

This protein is involved in the repair of mismatches in DNA. It is possible that it carries out the mismatch recognition step. This protein has a weak ATPase activity. This chain is DNA mismatch repair protein MutS, found in Francisella tularensis subsp. holarctica (strain OSU18).